A 488-amino-acid polypeptide reads, in one-letter code: MASTTTCTRFTDEYQLFEELGKGAFSVVRRCMKIPTGQEYAAKIINTKKLSARDHQKLEREARICRLLKHPNIVRLHDSISEEGFHYLVFDLVTGGELFEDIVAREYYSEADASHCIQQILESVNHCHLNGIVHRDLKPENLLLASKSKGAAVKLADFGLAIEVQGDQQAWFGFAGTPGYLSPEVLRKDPYGKPVDMWACGVILYILLVGYPPFWDEDQHRLYQQIKAGAYDFPSPEWDTVTPEAKDLINKMLTINPAKRITASEALKHPWICQRSTVASMMHRQETVDCLKKFNARRKLKGAILTTMLATRNFSAKSLLKKPDGVKKRKSSSSVQMMESTESSNTTIEDEDVKARKQEIIKVTEQLIEAINNGDFEAYTKICDPGLTAFEPEALGNLVEGMDFHRFYFENALSKSNKPIHTIILNPHVHLVGDDAACIAYIRLTQYMDGSGMPKTMQSEETRVWHRRDGKWQNVHFHRSGSPTVPIN.

Ala2 bears the N-acetylalanine mark. Residues 14–272 (YQLFEELGKG…ASEALKHPWI (259 aa)) enclose the Protein kinase domain. Residues 20–28 (LGKGAFSVV) and Lys43 contribute to the ATP site. Asp136 functions as the Proton acceptor in the catalytic mechanism. The interval 283-292 (HRQETVDCLK) is autoinhibitory domain. A Phosphothreonine; by autocatalysis modification is found at Thr287. The calmodulin-binding stretch occupies residues 291 to 301 (LKKFNARRKLK). Phosphothreonine; by autocatalysis is present on residues Thr306 and Thr307. Ser315 bears the Phosphoserine mark. N6-acetyllysine is present on Lys317. Phosphoserine occurs at positions 318 and 340. A disordered region spans residues 325-350 (GVKKRKSSSSVQMMESTESSNTTIED). Polar residues predominate over residues 332–347 (SSSVQMMESTESSNTT). Thr341 carries the phosphothreonine modification. Phosphoserine is present on Ser343. Residues Thr346 and Thr347 each carry the phosphothreonine modification. The residue at position 414 (Ser414) is a Phosphoserine.

It belongs to the protein kinase superfamily. CAMK Ser/Thr protein kinase family. CaMK subfamily. CAMK2 is composed of 4 different chains: alpha (CAMK2A), beta (CAMK2B), gamma (CAMK2G), and delta (CAMK2D). The different isoforms assemble into homo- or heteromultimeric holoenzymes composed of 12 subunits with two hexameric rings stacked one on top of the other. Interacts with RRAD and CACNB2. Autophosphorylation of Thr-287 following activation by Ca(2+)/calmodulin. Phosphorylation of Thr-287 locks the kinase into an activated state.

Its subcellular location is the cell membrane. The protein resides in the sarcolemma. The protein localises to the sarcoplasmic reticulum membrane. The enzyme catalyses L-seryl-[protein] + ATP = O-phospho-L-seryl-[protein] + ADP + H(+). It catalyses the reaction L-threonyl-[protein] + ATP = O-phospho-L-threonyl-[protein] + ADP + H(+). Activated by Ca(2+)/calmodulin. Binding of calmodulin results in conformational change that relieves intrasteric autoinhibition and allows autophosphorylation of Thr-287 which turns the kinase in a constitutively active form and confers to the kinase a Ca(2+)-independent activity. Functionally, calcium/calmodulin-dependent protein kinase involved in the regulation of Ca(2+) homeostatis and excitation-contraction coupling (ECC) in heart by targeting ion channels, transporters and accessory proteins involved in Ca(2+) influx into the myocyte, Ca(2+) release from the sarcoplasmic reticulum (SR), SR Ca(2+) uptake and Na(+) and K(+) channel transport. Targets also transcription factors and signaling molecules to regulate heart function. In its activated form, is involved in the pathogenesis of dilated cardiomyopathy and heart failure. Contributes to cardiac decompensation and heart failure by regulating SR Ca(2+) release via direct phosphorylation of RYR2 Ca(2+) channel on 'Ser-2808'. In the nucleus, phosphorylates the MEF2 repressor HDAC4, promoting its nuclear export and binding to 14-3-3 protein, and expression of MEF2 and genes involved in the hypertrophic program. Is essential for left ventricular remodeling responses to myocardial infarction. In pathological myocardial remodeling acts downstream of the beta adrenergic receptor signaling cascade to regulate key proteins involved in ECC. Regulates Ca(2+) influx to myocytes by binding and phosphorylating the L-type Ca(2+) channel subunit beta-2 CACNB2. In addition to Ca(2+) channels, can target and regulate the cardiac sarcolemmal Na(+) channel Nav1.5/SCN5A and the K+ channel Kv4.3/KCND3, which contribute to arrhythmogenesis in heart failure. Phosphorylates phospholamban (PLN/PLB), an endogenous inhibitor of SERCA2A/ATP2A2, contributing to the enhancement of SR Ca(2+) uptake that may be important in frequency-dependent acceleration of relaxation (FDAR) and maintenance of contractile function during acidosis. May participate in the modulation of skeletal muscle function in response to exercise, by regulating SR Ca(2+) transport through phosphorylation of PLN/PLB and triadin, a ryanodine receptor-coupling factor. In response to interferon-gamma (IFN-gamma) stimulation, catalyzes phosphorylation of STAT1, stimulating the JAK-STAT signaling pathway. This chain is Calcium/calmodulin-dependent protein kinase type II subunit delta (CAMK2D), found in Bos taurus (Bovine).